Here is a 287-residue protein sequence, read N- to C-terminus: RNA polymerase sigma factor RpoH (287 aa).

The tract at residues Leu-54–Arg-123 is sigma-70 factor domain-2. Residues Asp-78–Gln-81 carry the Interaction with polymerase core subunit RpoC motif. The segment at Ala-230–Val-283 is sigma-70 factor domain-4. A DNA-binding region (H-T-H motif) is located at residues Leu-256 to Lys-275.

It belongs to the sigma-70 factor family. RpoH subfamily. As to quaternary structure, interacts with the RNA polymerase core enzyme.

Its subcellular location is the cytoplasm. Sigma factors are initiation factors that promote the attachment of RNA polymerase to specific initiation sites and are then released. This sigma factor is involved in regulation of expression of heat shock genes. This chain is RNA polymerase sigma factor RpoH, found in Buchnera aphidicola subsp. Baizongia pistaciae (strain Bp).